We begin with the raw amino-acid sequence, 149 residues long: Small ribosomal subunit protein uS17c (149 aa).

Residues 1–49 constitute a chloroplast transit peptide; it reads MITSSLTSSLQALKLSSPFAHGSTPLSSLSKPNSFPNHRMPALVPVIRA.

It belongs to the universal ribosomal protein uS17 family. As to quaternary structure, part of the 30S ribosomal subunit.

The protein resides in the plastid. It is found in the chloroplast. Its function is as follows. One of the primary rRNA binding proteins, it binds specifically to the 5'-end of 16S ribosomal RNA. Required for optimal plastid performance in terms of photosynthesis and growth. Required for the translation of plastid mRNAs. Plays a critical role in biosynthesis of thylakoid membrane proteins encoded by chloroplast genes. The sequence is that of Small ribosomal subunit protein uS17c (RPS17) from Arabidopsis thaliana (Mouse-ear cress).